Consider the following 244-residue polypeptide: MTTKNTSGRGQRELRVRVKTAKGRKLSSTLWLERQLNDPYVIRAKKEGYRGRAAYKILELDDKFGFLKPGGRVVDLGCAPGGWCQVAVERVNALGQRKNKPEGTVLGVDLQEVEPISGAEIHQLDFLSDDADEKVKGWLGGRADVVMSDMAAAASGHKGTDHLRIIALCEAAAAFAFDVLEEGGTFVAKVLAGGAENELQALLKKNFTKVANVKPPASRADSSEKFVVAMGFRGRASEPEEGEA.

5 residues coordinate S-adenosyl-L-methionine: glycine 81, tryptophan 83, aspartate 109, aspartate 125, and aspartate 149. Residue lysine 189 is the Proton acceptor of the active site.

This sequence belongs to the class I-like SAM-binding methyltransferase superfamily. RNA methyltransferase RlmE family.

It localises to the cytoplasm. It carries out the reaction uridine(2552) in 23S rRNA + S-adenosyl-L-methionine = 2'-O-methyluridine(2552) in 23S rRNA + S-adenosyl-L-homocysteine + H(+). In terms of biological role, specifically methylates the uridine in position 2552 of 23S rRNA at the 2'-O position of the ribose in the fully assembled 50S ribosomal subunit. In Cereibacter sphaeroides (strain ATCC 17029 / ATH 2.4.9) (Rhodobacter sphaeroides), this protein is Ribosomal RNA large subunit methyltransferase E.